Reading from the N-terminus, the 372-residue chain is DNA replication and repair protein RecF (372 aa).

30-37 (GENAQGKT) lines the ATP pocket.

Belongs to the RecF family.

The protein localises to the cytoplasm. In terms of biological role, the RecF protein is involved in DNA metabolism; it is required for DNA replication and normal SOS inducibility. RecF binds preferentially to single-stranded, linear DNA. It also seems to bind ATP. The protein is DNA replication and repair protein RecF of Shouchella clausii (strain KSM-K16) (Alkalihalobacillus clausii).